The primary structure comprises 501 residues: Bifunctional purine biosynthesis protein PurH (501 aa).

The 144-residue stretch at 1–144 (MKKRALISVF…KNFKDVVVLS (144 aa)) folds into the MGS-like domain.

The protein belongs to the PurH family.

The catalysed reaction is (6R)-10-formyltetrahydrofolate + 5-amino-1-(5-phospho-beta-D-ribosyl)imidazole-4-carboxamide = 5-formamido-1-(5-phospho-D-ribosyl)imidazole-4-carboxamide + (6S)-5,6,7,8-tetrahydrofolate. It catalyses the reaction IMP + H2O = 5-formamido-1-(5-phospho-D-ribosyl)imidazole-4-carboxamide. Its pathway is purine metabolism; IMP biosynthesis via de novo pathway; 5-formamido-1-(5-phospho-D-ribosyl)imidazole-4-carboxamide from 5-amino-1-(5-phospho-D-ribosyl)imidazole-4-carboxamide (10-formyl THF route): step 1/1. The protein operates within purine metabolism; IMP biosynthesis via de novo pathway; IMP from 5-formamido-1-(5-phospho-D-ribosyl)imidazole-4-carboxamide: step 1/1. The sequence is that of Bifunctional purine biosynthesis protein PurH from Clostridium perfringens (strain 13 / Type A).